Here is a 218-residue protein sequence, read N- to C-terminus: Glutathione S-transferase Mu 1 (218 aa).

The 87-residue stretch at 2-88 (PMILGYWNVR…YLARKHHLDG (87 aa)) folds into the GST N-terminal domain. 7 to 8 (YW) contacts glutathione. The residue at position 34 (Thr34) is a Phosphothreonine. Glutathione-binding positions include 43–46 (RSQW), Lys50, and 59–60 (NL). The residue at position 67 (Ser67) is a Phosphoserine. 72-73 (QS) contacts glutathione. The GST C-terminal domain maps to 90–208 (TEEERIRADI…KSSRYIATPI (119 aa)). Tyr116 lines the substrate pocket. Position 210 is a phosphoserine (Ser210).

As to quaternary structure, homodimer.

Its subcellular location is the cytoplasm. It catalyses the reaction RX + glutathione = an S-substituted glutathione + a halide anion + H(+). It carries out the reaction prostaglandin A2 + glutathione = prostaglandin A2-S-(R)-glutathione. The enzyme catalyses prostaglandin J2 + glutathione = prostaglandin J2-S-(R)-glutathione. The catalysed reaction is prostaglandin J2 + glutathione = prostaglandin J2-S-(S)-glutathione. It catalyses the reaction prostaglandin A2 + glutathione = prostaglandin A2-S-(S)-glutathione. It carries out the reaction 11(S)-hydroxy-14(S),15(S)-epoxy-(5Z,8Z,12E)-eicosatrienoate + glutathione = (11S,15S)-dihydroxy-14(R)-S-glutathionyl-(5Z,8Z,12E)-eicosatrienoate. In terms of biological role, conjugation of reduced glutathione to a wide number of exogenous and endogenous hydrophobic electrophiles. Involved in the formation of glutathione conjugates of both prostaglandin A2 (PGA2) and prostaglandin J2 (PGJ2). Participates in the formation of novel hepoxilin regioisomers. This is Glutathione S-transferase Mu 1 from Mus musculus (Mouse).